Here is a 260-residue protein sequence, read N- to C-terminus: MTFPPVADPSSLRILISNDDGINAPGIKVLERIARTLSKDVWVVAPETEQSAAGHSLTIRRPLRVRKVSARRYAVDGTPTDSVLLGVNHVLKGKKPDLVLSGINRGANLGEDVTYSGTVAAAMEGTILGIPAIALSQTLEHPHPVKWGTVEHWAPDVIRRLLAKGWSRNVLINVNFPDVIAASVTGIEITRQGKRKIGDEIMERHDPRGEAYVWIGAQRAEDRSKPGTDIEAVFRGAISVTPLCFDLTHRDDMKALETAF.

Residues Asp19, Asp20, Ser51, and Asn104 each coordinate a divalent metal cation.

This sequence belongs to the SurE nucleotidase family. The cofactor is a divalent metal cation.

It is found in the cytoplasm. The catalysed reaction is a ribonucleoside 5'-phosphate + H2O = a ribonucleoside + phosphate. In terms of biological role, nucleotidase that shows phosphatase activity on nucleoside 5'-monophosphates. The protein is 5'-nucleotidase SurE of Paramagnetospirillum magneticum (strain ATCC 700264 / AMB-1) (Magnetospirillum magneticum).